Reading from the N-terminus, the 473-residue chain is O-methyltransferase ARMGADRAFT_1088206 (473 aa).

S-adenosyl-L-methionine-binding positions include 276 to 277 (AG), Asp-299, 330 to 331 (DM), and Arg-348. The active-site Proton acceptor is His-352.

The protein belongs to the class I-like SAM-binding methyltransferase superfamily. Cation-independent O-methyltransferase family.

The protein operates within secondary metabolite biosynthesis. O-methyltransferase, part of the gene cluster that mediates the biosynthesis of melleolides, a range of antifungal and phytotoxic polyketide derivatives composed of an orsellinic acid (OA) moiety esterified to various sesquiterpene alcohols. The first step in melleolides biosynthesis is performed by the delta(6)-protoilludene synthase PRO1 which catalyzes the cyclization of farnesyl diphosphate to protoilludene. The orsellinic acid synthase armB produces OA by condensing acetyl-CoA with 3 malonyl-CoA units in a three-round chain elongation reaction folowed by a C2-C7 ring closure. ArmB further catalyzes the trans-esterification of OA to the various sesquiterpene alcohols resulting from the hydroxylation of protoilludene. The melleolides cluster also includes 5 cytochrome P450 monooxygenases, 4 NAD(+)-dependent oxidoreductases, one flavin-dependent oxidoreductase, and one O-methyltransferase. The cytochrome P450 monooxygenases may be involved in protoilludene hydroxylation to elaborate melleolides with multiple alcohol groups, such as melleolide D, which carries alcohol functionalities at C-4, C-5, C-10, and C-13. The role of the NAD(+)-dependent enzymes remains unknown. Numerous melleolides, including arnamial, show 5'-O-methylation of the aromatic moiety which may be catalyzed by the methyltransferase encoded in the cluster. The flavin-dependent oxidoreductase might represent the dehydrogenase yielding the aldehyde in position 1 of arnamial and other melleolides. Finally, several halogenase localized outside of the cluster, are able to catalyze the transfer of a single chlorine atom to the melleolide backbone, resulting in a 6'-chloromelleolide product. The polypeptide is O-methyltransferase ARMGADRAFT_1088206 (Armillaria gallica (Bulbous honey fungus)).